Consider the following 113-residue polypeptide: U11-theraphotoxin-Hhn1j (113 aa).

Residues 1–21 (MNTVRVTFLLVFVLAVSLGQA) form the signal peptide. Residues 22–74 (DKDENRMEMQEKTEQGKSYLDFAENLLLQKLEELEAKLLEEDSEESRNSRQKR) constitute a propeptide that is removed on maturation. Residues 60–69 (LEEDSEESRN) are compositionally biased toward basic and acidic residues. The tract at residues 60-83 (LEEDSEESRNSRQKRCIGEGVPCD) is disordered. 3 disulfide bridges follow: Cys75–Cys90, Cys82–Cys95, and Cys89–Cys110.

This sequence belongs to the neurotoxin 14 (magi-1) family. 01 (HNTX-16) subfamily. Expressed by the venom gland.

It localises to the secreted. Probable ion channel inhibitor. This Cyriopagopus hainanus (Chinese bird spider) protein is U11-theraphotoxin-Hhn1j.